The primary structure comprises 286 residues: Bifunctional protein FolD (286 aa).

Residues 164–166 (GRS), S193, and I234 contribute to the NADP(+) site.

Belongs to the tetrahydrofolate dehydrogenase/cyclohydrolase family. Homodimer.

It catalyses the reaction (6R)-5,10-methylene-5,6,7,8-tetrahydrofolate + NADP(+) = (6R)-5,10-methenyltetrahydrofolate + NADPH. The catalysed reaction is (6R)-5,10-methenyltetrahydrofolate + H2O = (6R)-10-formyltetrahydrofolate + H(+). The protein operates within one-carbon metabolism; tetrahydrofolate interconversion. Catalyzes the oxidation of 5,10-methylenetetrahydrofolate to 5,10-methenyltetrahydrofolate and then the hydrolysis of 5,10-methenyltetrahydrofolate to 10-formyltetrahydrofolate. The protein is Bifunctional protein FolD of Nitratidesulfovibrio vulgaris (strain ATCC 29579 / DSM 644 / CCUG 34227 / NCIMB 8303 / VKM B-1760 / Hildenborough) (Desulfovibrio vulgaris).